The primary structure comprises 438 residues: Fibrous sheath-interacting protein 1 (438 aa).

The segment at 1–111 is disordered; sequence MSMDIIKGNL…PEHSDDPKLE (111 aa). Low complexity predominate over residues 18-32; the sequence is SSSRSRPGSRSSNGS. A compositionally biased stretch (basic and acidic residues) spans 53 to 72; that stretch reads SGKEGHTSDSRVEERRKISD. Residues serine 71, serine 88, and serine 89 each carry the phosphoserine modification. The stretch at 131-157 forms a coiled coil; sequence LAKRRIREKEIKKQGLEMRIKLWEELK. Positions 354–390 are disordered; it reads SQSNKGDMEHDSNEERNTEPTPGEKILRDNKEQRDRE. Basic and acidic residues-rich tracts occupy residues 359-371 and 378-390; these read GDME…ERNT and KILR…RDRE.

The protein belongs to the FSIP1 family.

The protein is Fibrous sheath-interacting protein 1 (Fsip1) of Rattus norvegicus (Rat).